Consider the following 366-residue polypeptide: Probable quinol oxidase subunit 2 (366 aa).

Positions Met1–Gly19 are cleaved as a signal peptide. Cys20 is lipidated: N-palmitoyl cysteine. Cys20 carries the S-diacylglycerol cysteine lipid modification. Helical transmembrane passes span Phe38–Phe58 and Ala80–Pro100. The segment at Glu330–His366 is disordered. A compositionally biased stretch (basic and acidic residues) spans Glu335–His366.

Belongs to the cytochrome c oxidase subunit 2 family.

The protein localises to the cell membrane. It carries out the reaction 2 a quinol + O2 = 2 a quinone + 2 H2O. Catalyzes quinol oxidation with the concomitant reduction of oxygen to water. Subunit II transfers the electrons from a quinol to the binuclear center of the catalytic subunit I. The protein is Probable quinol oxidase subunit 2 (qoxA) of Staphylococcus aureus (strain USA300).